The sequence spans 510 residues: Protein PLASTID TRANSCRIPTIONALLY ACTIVE 16, chloroplastic (510 aa).

Residues 1–14 are compositionally biased toward polar residues; that stretch reads MASSSTSFPLTTAP. The transit peptide at 1–19 directs the protein to the chloroplast; it reads MASSSTSFPLTTAPPQGVR. Disordered regions lie at residues 1–24 and 38–58; these read MASS…NRRK and LGKT…NPFQ. The span at 41 to 51 shows a compositional bias: basic and acidic residues; it reads TKGDDDSEGKQ. 94–123 contacts NADP(+); that stretch reads IFVAGATGQAGIRIAQTLLQRGFSVRAGVP. A coiled-coil region spans residues 354 to 403; sequence ARERAEEEAKVAADKAREAAEAAKEFEKQMQKLSEKEAEAASLAEDAQQK. A Phosphoserine modification is found at S395. T451 bears the Phosphothreonine; by STN7 mark. Residues 453-493 are disordered; sequence RGQAKARNLPPKKAVVKQRPSSPFASKPKEERPKKPEKEVR. The span at 479-493 shows a compositional bias: basic and acidic residues; it reads KPKEERPKKPEKEVR.

Belongs to the NAD(P)-dependent epimerase/dehydratase family. Component of the plastid transcriptionally active chromosome required for plastid gene expression. Interacts with DEGP1 under high light conditions and maybe its degradation target. In terms of processing, excluded from chloroplast nucleoid when phosphorylated on Thr-451 by STN7 that may regulate membrane-anchoring functions of the nucleoid.

The protein resides in the plastid. Its subcellular location is the chloroplast stroma. It is found in the chloroplast nucleoid. It localises to the chloroplast thylakoid membrane. Probably involved in the regulation of plastid gene expression. The polypeptide is Protein PLASTID TRANSCRIPTIONALLY ACTIVE 16, chloroplastic (Arabidopsis thaliana (Mouse-ear cress)).